The primary structure comprises 58 residues: UPF0391 membrane protein Sden_3712 (58 aa).

The next 2 membrane-spanning stretches (helical) occupy residues leucine 6–alanine 26 and alanine 27–valine 47.

It belongs to the UPF0391 family.

The protein resides in the cell membrane. The protein is UPF0391 membrane protein Sden_3712 of Shewanella denitrificans (strain OS217 / ATCC BAA-1090 / DSM 15013).